The primary structure comprises 1207 residues: MIDVNNFHYMKIGLASPEKIRSWSFGEVKKPETINYRTLKPEKDGLFCERIFGPTKDWECSCGKYKRVRYKGMVCDRCGVEVTKSKVRRERMGHIELAAPVSHIWYFKGIPSRMGLLLDMSPRALEEVIYFASYVVVDPGPTGLEKKTLLSEAEFRDYYDKYPGQFVAKMGAEGIKDLLEEIDLDEELKLLRDELESATGQRLTRAIKRLEVVESFRNSGNKPSWMILDVLPIIPPEIRPMVQLDGGRFATSDLNDLYRRVINRNNRLKRLLDLGAPGIIVQNEKRMLQEAVDALIDNGRRGRPVTGPGNRPLKSLSHMLKGKQGRFRQNLLGKRVDYSGRSVIAVGPSLKMYQCGLPKEMALELFKPFVMKELVQREIATNIKNAKSKIERMDDEVWDVLEEVIREHPVLLNRAPTLHRLGIQAFEPTLVEGRAIRLHPLVTTAYNADFDGDQMAVHVPLSKEAQAEARMLMLAAQNILNPKDGKPVVTPSQDMVLGNYYLTLERKDAVNTGAIFNNTNEVLKAYANGFVHLHTRIGVHASSFNNPTFTEEQNKKILATSVGKIIFNEIIPDSFAYINEPTQENLERKTPNRYFIDPTTLGEGGLKEYFENEELIEPFNKKFLGNIIAEVFNRFSITDTSMMLDRMKDLGFKFSSKAGITVGVADIVVLPDKQQILDEHEKLVDRITKQFNRGLITEEERYNAVVEIWTDAKDQIQGELMQSLDKTNPIFMMSDSGARGNASNFTQLAGMRGLMAAPSGKIIELPITSSFREGLTVLEYFISTHGARKGLADTALKTADSGYLTRRLVDVAQDVIVREEDCGTDRGLLVSDIKEGTEMIEPFIERIEGRYSKETIRHPETDEVIIRPDELITPEIAKKITDAGIEQMYIRSAFTCNARHGVCEKCYGKNLATGEKVEVGEAVGTIAAQSIGEPGTQLTMRTFHTGGVAGSDITQGLPRIQEIFEARNPKGQAVITEIEGVVEDIKLAKDRQQEIVVKGANETRSYLASGTSRIIVEIGQPVQRGEVLTEGSIEPKNYLSVAGLNATESYLLKEVQKVYRMQGVEIDDKHVEVMVRQMLRKVRIIEAGDTKLLPGSLVDIHNFTDANREAFKHRKRPATAKPVLLGITKASLETESFLSAASFQETTRVLTDAAIKGKRDDLLGLKENVIIGKLIPAGTGMRRYSDVKYEKTAKPVAEVESQTEVTE.

4 residues coordinate Zn(2+): cysteine 60, cysteine 62, cysteine 75, and cysteine 78. Residues aspartate 449, aspartate 451, and aspartate 453 each contribute to the Mg(2+) site. 4 residues coordinate Zn(2+): cysteine 822, cysteine 896, cysteine 903, and cysteine 906.

The protein belongs to the RNA polymerase beta' chain family. As to quaternary structure, the RNAP catalytic core consists of 2 alpha, 1 beta, 1 beta' and 1 omega subunit. When a sigma factor is associated with the core the holoenzyme is formed, which can initiate transcription. Mg(2+) is required as a cofactor. The cofactor is Zn(2+).

The catalysed reaction is RNA(n) + a ribonucleoside 5'-triphosphate = RNA(n+1) + diphosphate. In terms of biological role, DNA-dependent RNA polymerase catalyzes the transcription of DNA into RNA using the four ribonucleoside triphosphates as substrates. This chain is DNA-directed RNA polymerase subunit beta', found in Staphylococcus aureus (strain MRSA252).